The primary structure comprises 335 residues: Dolichyl-diphosphooligosaccharide--protein glycosyltransferase subunit MAGT1 (335 aa).

The first 29 residues, 1-29 (MASPRWLWCVCATAAVTLLLVSKVPSASA), serve as a signal peptide directing secretion. The Extracellular portion of the chain corresponds to 30–184 (QRKKEKVLVE…DVNIRVIRPP (155 aa)). The Thioredoxin domain maps to 47 to 175 (WTNQRPVIRM…IARWIADRTD (129 aa)). N71 carries an N-linked (GlcNAc...) asparagine glycan. C87 and C90 form a disulfide bridge. Residues 185-205 (NYAGPLMLGLLLAVIGGLVYL) traverse the membrane as a helical segment. Residues 206–209 (RRSN) are Cytoplasmic-facing. The helical transmembrane segment at 210 to 230 (MEFLFNKTGWAFAALCFVLAM) threads the bilayer. Residues 231-270 (TSGQMWNHIRGPPYAHKNPHTGHVNYIHGSSQAQFVAETH) lie on the Extracellular side of the membrane. A helical transmembrane segment spans residues 271 to 291 (IVLLFNGGVTLGMVLLCEAAA). At 292 to 300 (SDMDIGKRR) the chain is on the cytoplasmic side. Residues 301–321 (MMCIAGIGLVVLFFSWMLSIF) traverse the membrane as a helical segment. Over 322 to 335 (RSKYHGYPYSFLMS) the chain is Extracellular.

Belongs to the OST3/OST6 family. In terms of assembly, accessory component of the STT3B-containing form of the oligosaccharyltransferase (OST) complex. OST exists in two different complex forms which contain common core subunits RPN1, RPN2, OST48, OST4, DAD1 and TMEM258, either STT3A or STT3B as catalytic subunits, and form-specific accessory subunits. OST can form stable complexes with the Sec61 complex or with both the Sec61 and TRAP complexes. The association of TUSC3 or MAGT1 with the STT3B-containing complex seems to be mutually exclusvice.

Its subcellular location is the cell membrane. It localises to the endoplasmic reticulum. It is found in the endoplasmic reticulum membrane. Its pathway is protein modification; protein glycosylation. In terms of biological role, accessory component of the STT3B-containing form of the N-oligosaccharyl transferase (OST) complex which catalyzes the transfer of a high mannose oligosaccharide from a lipid-linked oligosaccharide donor to an asparagine residue within an Asn-X-Ser/Thr consensus motif in nascent polypeptide chains. Involved in N-glycosylation of STT3B-dependent substrates. Specifically required for the glycosylation of a subset of acceptor sites that are near cysteine residues; in this function seems to act redundantly with TUSC3. In its oxidized form proposed to form transient mixed disulfides with a glycoprotein substrate to facilitate access of STT3B to the unmodified acceptor site. Also has oxidoreductase-independent functions in the STT3B-containing OST complex possibly involving substrate recognition. Could indirectly play a role in Mg(2+) transport in epithelial cells. This Rattus norvegicus (Rat) protein is Dolichyl-diphosphooligosaccharide--protein glycosyltransferase subunit MAGT1.